Here is a 976-residue protein sequence, read N- to C-terminus: Vacuolar membrane protease (976 aa).

At 1–15 the chain is on the cytoplasmic side; that stretch reads MKLKSVFRSVLKYRK. Residues 16–36 traverse the membrane as a helical segment; that stretch reads TNLSLLLLITYSIITLLYIFD. Residues 37 to 359 lie on the Vacuolar side of the membrane; sequence HERYKLNLPK…KFFVISAKTL (323 aa). Residues asparagine 96 and asparagine 121 are each glycosylated (N-linked (GlcNAc...) asparagine). Zn(2+) is bound by residues histidine 156 and aspartate 168. N-linked (GlcNAc...) asparagine glycosylation occurs at asparagine 189. The active-site Proton acceptor is the glutamate 200. Glutamate 201 is a Zn(2+) binding site. 2 N-linked (GlcNAc...) asparagine glycosylation sites follow: asparagine 212 and asparagine 217. Residues glutamate 226 and histidine 300 each contribute to the Zn(2+) site. The chain crosses the membrane as a helical span at residues 360–380; it reads FYWNCIFLLVSPVVAIGLYLI. At 381–392 the chain is on the cytoplasmic side; the sequence is SRDRMTWKSHSW. The helical transmembrane segment at 393-412 threads the bilayer; that stretch reads LSWTRFPLSLAAGIIVQKLF. At 413 to 428 the chain is on the vacuolar side; sequence SNDIIRSNPLTFSRNY. A helical transmembrane segment spans residues 429–449; the sequence is FWPISAFFTQVIFTSYVLINC. The Cytoplasmic segment spans residues 450 to 461; that stretch reads SNFFFPCADMKS. Residues 462–482 form a helical membrane-spanning segment; that stretch reads LSIIELFIILWTILLFTSKLL. Residues 483–496 lie on the Vacuolar side of the membrane; the sequence is YSSDYRYTGLYPLS. Residues 497-517 form a helical membrane-spanning segment; sequence IFFLLSTIAAILRLLALALGM. Residues 518 to 627 lie on the Cytoplasmic side of the membrane; it reads RTRKRLGREC…NSLKLEYTDY (110 aa). Positions 528–610 are disordered; it reads RDHHSNYSSH…PLLKGSNSME (83 aa). Residues 549-558 are compositionally biased toward polar residues; it reads NLEQPQDQFT. Low complexity predominate over residues 559-570; the sequence is SSQDDQASIQDD. Residues 582–601 are compositionally biased toward basic and acidic residues; sequence NVDEDHGMDSSSQQHDERVP. Residues 628–648 form a helical membrane-spanning segment; the sequence is AWIIQFLLIVPIPSFILFNSV. Topologically, residues 649-668 are vacuolar; sequence DVIMDALNHTVQEGSKATFD. N-linked (GlcNAc...) asparagine glycosylation occurs at asparagine 656. Residues 669–689 form a helical membrane-spanning segment; the sequence is VLRFGMVGSILMALPILPFFY. Residues 690–692 lie on the Cytoplasmic side of the membrane; it reads KVN. A helical transmembrane segment spans residues 693–713; the sequence is YITISLTALLFLISASKTLLV. The Vacuolar segment spans residues 714–976; sequence HPFTNSNPLK…LVIVKDAIIL (263 aa). N-linked (GlcNAc...) asparagine glycosylation is found at asparagine 768, asparagine 796, asparagine 811, asparagine 866, and asparagine 937.

This sequence belongs to the peptidase M28 family. Zn(2+) is required as a cofactor.

The protein localises to the vacuole membrane. May be involved in vacuolar sorting and osmoregulation. This chain is Vacuolar membrane protease, found in Saccharomyces cerevisiae (strain Lalvin EC1118 / Prise de mousse) (Baker's yeast).